The primary structure comprises 777 residues: Intraflagellar transport protein 80 homolog (777 aa).

7 WD repeats span residues 12-50 (KHQE…TSLI), 104-143 (AHCG…RSTL), 145-185 (QQGI…LQWK), 186-225 (AHDG…LYGS), 227-265 (PHEH…YALE), 267-306 (PNTG…WEWK), and 504-542 (KLGT…YVDR). The segment at 758-777 (TKERDRSSSGQSSKNTGLKP) is disordered. The span at 765–777 (SSGQSSKNTGLKP) shows a compositional bias: polar residues.

As to quaternary structure, component of the IFT complex B, at least composed of IFT20, IFT22, IFT25, IFT27, IFT46, IFT52, TRAF3IP1/IFT54, IFT57, IFT74, IFT80, IFT81, and IFT88. Interacts with IFT88. Interacts with IFT57 and IFT70B.

The protein localises to the cytoplasm. It is found in the cytoskeleton. It localises to the cilium basal body. Its subcellular location is the cilium axoneme. Functionally, component of the intraflagellar transport (IFT) complex B, which is essential for the development and maintenance of motile and sensory cilia. The protein is Intraflagellar transport protein 80 homolog (Ift80) of Rattus norvegicus (Rat).